The sequence spans 270 residues: Formamidopyrimidine-DNA glycosylase (270 aa).

Catalysis depends on proline 2, which acts as the Schiff-base intermediate with DNA. Glutamate 3 acts as the Proton donor in catalysis. Residue lysine 58 is the Proton donor; for beta-elimination activity of the active site. Residues histidine 91, arginine 109, and arginine 151 each coordinate DNA. The segment at 236–270 (MVYNRQEEPCRLCGTPIRQIRQGQRSTYYCPLCQP) adopts an FPG-type zinc-finger fold. Arginine 260 functions as the Proton donor; for delta-elimination activity in the catalytic mechanism.

It belongs to the FPG family. In terms of assembly, monomer. Requires Zn(2+) as cofactor.

It carries out the reaction Hydrolysis of DNA containing ring-opened 7-methylguanine residues, releasing 2,6-diamino-4-hydroxy-5-(N-methyl)formamidopyrimidine.. The catalysed reaction is 2'-deoxyribonucleotide-(2'-deoxyribose 5'-phosphate)-2'-deoxyribonucleotide-DNA = a 3'-end 2'-deoxyribonucleotide-(2,3-dehydro-2,3-deoxyribose 5'-phosphate)-DNA + a 5'-end 5'-phospho-2'-deoxyribonucleoside-DNA + H(+). In terms of biological role, involved in base excision repair of DNA damaged by oxidation or by mutagenic agents. Acts as a DNA glycosylase that recognizes and removes damaged bases. Has a preference for oxidized purines, such as 7,8-dihydro-8-oxoguanine (8-oxoG). Has AP (apurinic/apyrimidinic) lyase activity and introduces nicks in the DNA strand. Cleaves the DNA backbone by beta-delta elimination to generate a single-strand break at the site of the removed base with both 3'- and 5'-phosphates. The chain is Formamidopyrimidine-DNA glycosylase from Chromobacterium violaceum (strain ATCC 12472 / DSM 30191 / JCM 1249 / CCUG 213 / NBRC 12614 / NCIMB 9131 / NCTC 9757 / MK).